The sequence spans 199 residues: Female-specific protein transformer (199 aa).

Disordered regions lie at residues 1 to 121 (MDAD…RTPR) and 178 to 199 (YRAG…QAPN). Residues 20-37 (REKMPYFADEVRERDRVR) are compositionally biased toward basic and acidic residues. Basic residues-rich tracts occupy residues 56–69 (RRSR…RSRT), 77–92 (CQRR…RSGS), and 102–119 (SRRR…RSRT).

It localises to the nucleus speckle. In terms of biological role, member of the regulatory pathway controlling female somatic sexual differentiation, regulated by Sxl. Activates dsx female-specific splicing by promoting the formation of a splicing enhancer complex which consists of tra, tra2 and sr proteins. This Drosophila virilis (Fruit fly) protein is Female-specific protein transformer (tra).